A 73-amino-acid chain; its full sequence is Potassium channel toxin alpha-KTx 27.4 (73 aa).

Residues 1–26 (MKFLFLTLVLLYFTAILVFIVFPSYA) form the signal peptide.

This sequence belongs to the short scorpion toxin superfamily. Potassium channel inhibitor family. Alpha-KTx 27 subfamily. In terms of processing, contains 4 disulfide bonds. Expressed by the venom gland.

Its subcellular location is the secreted. The polypeptide is Potassium channel toxin alpha-KTx 27.4 (Mesobuthus gibbosus (Mediterranean checkered scorpion)).